A 316-amino-acid polypeptide reads, in one-letter code: 4-hydroxyphenylacetate decarboxylase activating enzyme (316 aa).

Residues 20–307 (HDGPGCRTTV…QDIFLDNGIA (288 aa)) enclose the Radical SAM core domain. [4Fe-4S] cluster is bound by residues C34, C38, C41, C60, C66, C69, and C105. 40-42 (WCA) serves as a coordination point for S-adenosyl-L-methionine. Residues 84–115 (NKPVIDWNICKDCESFECVNSCYYNAFKLCAK) form the 4Fe-4S ferredoxin-type domain. S-adenosyl-L-methionine contacts are provided by residues G144, 193 to 195 (DIK), and H267.

The protein belongs to the organic radical-activating enzymes family. As to quaternary structure, monomer. Requires [4Fe-4S] cluster as cofactor.

It catalyses the reaction glycyl-[protein] + reduced [flavodoxin] + S-adenosyl-L-methionine = glycin-2-yl radical-[protein] + semiquinone [flavodoxin] + 5'-deoxyadenosine + L-methionine + H(+). Functionally, catalyzes activation of 4-hydroxyphenylacetate decarboxylase under anaerobic conditions by generation of an organic free radical on a glycine residue, via a homolytic cleavage of S-adenosyl-L-methionine (SAM). The chain is 4-hydroxyphenylacetate decarboxylase activating enzyme from Clostridioides difficile (Peptoclostridium difficile).